We begin with the raw amino-acid sequence, 489 residues long: Rhamnulokinase (489 aa).

Position 13-17 (13-17) interacts with ATP; that stretch reads ASSGR. The cysteines at positions 68 and 222 are disulfide-linked. Residues Gly-83 and 236-238 contribute to the substrate site; that span reads HDT. Asp-237 acts as the Proton acceptor in catalysis. Thr-259 contributes to the ATP binding site. A substrate-binding site is contributed by Asn-296. Residue Gln-304 coordinates ATP. A disulfide bridge links Cys-353 with Cys-370. Gly-402 contributes to the ATP binding site. Cys-413 and Cys-417 are oxidised to a cystine.

The protein belongs to the rhamnulokinase family. It depends on Mg(2+) as a cofactor.

The catalysed reaction is L-rhamnulose + ATP = L-rhamnulose 1-phosphate + ADP + H(+). It participates in carbohydrate degradation; L-rhamnose degradation; glycerone phosphate from L-rhamnose: step 2/3. Its function is as follows. Involved in the catabolism of L-rhamnose (6-deoxy-L-mannose). Catalyzes the transfer of the gamma-phosphate group from ATP to the 1-hydroxyl group of L-rhamnulose to yield L-rhamnulose 1-phosphate. The chain is Rhamnulokinase from Salmonella typhimurium (strain LT2 / SGSC1412 / ATCC 700720).